Consider the following 92-residue polypeptide: Elongation factor 1-beta (92 aa).

This sequence belongs to the EF-1-beta/EF-1-delta family.

Its function is as follows. Promotes the exchange of GDP for GTP in EF-1-alpha/GDP, thus allowing the regeneration of EF-1-alpha/GTP that could then be used to form the ternary complex EF-1-alpha/GTP/AAtRNA. The polypeptide is Elongation factor 1-beta (Pyrobaculum arsenaticum (strain DSM 13514 / JCM 11321 / PZ6)).